The sequence spans 308 residues: 4-hydroxy-tetrahydrodipicolinate synthase (308 aa).

Threonine 56 is a binding site for pyruvate. The active-site Proton donor/acceptor is the tyrosine 144. Residue lysine 172 is the Schiff-base intermediate with substrate of the active site. A pyruvate-binding site is contributed by valine 212.

It belongs to the DapA family. As to quaternary structure, homotetramer; dimer of dimers.

The protein resides in the cytoplasm. The catalysed reaction is L-aspartate 4-semialdehyde + pyruvate = (2S,4S)-4-hydroxy-2,3,4,5-tetrahydrodipicolinate + H2O + H(+). The protein operates within amino-acid biosynthesis; L-lysine biosynthesis via DAP pathway; (S)-tetrahydrodipicolinate from L-aspartate: step 3/4. Its function is as follows. Catalyzes the condensation of (S)-aspartate-beta-semialdehyde [(S)-ASA] and pyruvate to 4-hydroxy-tetrahydrodipicolinate (HTPA). The sequence is that of 4-hydroxy-tetrahydrodipicolinate synthase from Kineococcus radiotolerans (strain ATCC BAA-149 / DSM 14245 / SRS30216).